A 134-amino-acid polypeptide reads, in one-letter code: Small ribosomal subunit protein uS8c (134 aa).

The protein belongs to the universal ribosomal protein uS8 family. As to quaternary structure, part of the 30S ribosomal subunit.

Its subcellular location is the plastid. The protein resides in the chloroplast. Its function is as follows. One of the primary rRNA binding proteins, it binds directly to 16S rRNA central domain where it helps coordinate assembly of the platform of the 30S subunit. This is Small ribosomal subunit protein uS8c (rps8) from Coffea arabica (Arabian coffee).